The following is a 489-amino-acid chain: WPP domain-interacting protein 1 (489 aa).

The interval 49–73 is disordered; that stretch reads SNSVELGKPMSFDSPGDGGGAYSPV. 3 short sequence motifs (nuclear localization signal) span residues 80-81, 83-84, and 104-105; these read RK, RR, and KR. Residues 195 to 264 form a disordered region; sequence PMISSGQGGN…DDAGGEGGES (70 aa). Basic and acidic residues predominate over residues 215-224; the sequence is GESVDFEKEN. Residues 323 to 446 are a coiled coil; that stretch reads EIVTLVNNVE…QDLQNDCIEI (124 aa). The KASH domain occupies 459 to 489; sequence SYVLIQLVLLSTVVLLLLSQLLPEPDTVVPT. A helical transmembrane segment spans residues 460–480; it reads YVLIQLVLLSTVVLLLLSQLL.

In terms of assembly, homodimer and heterodimer with WIP2. Component of Ran complexes at least composed of WIT1 or WIT2, RANGAP1 or RANGAP2, and WIP1 or WIP2 or WIP3. Interacts with RANGAP1, RANGAP2, WPP1/MAF1, and WPP2/MAF2. Interacts with SUN1 and SUN2. Interacts with KIN1. Core component of the LINC complex which is composed of inner nuclear membrane SUN domain-containing proteins coupled to outer nuclear membrane WIP and WIT proteins. The LINC complex also involves nucleoskeletal proteins CRWN/LINC and possibly KAKU4 and the cytoskeletal myosin KAKU1. Interacts with WIT1 and SUN2. Interacts with WIT2. Interacts with SUN3. As to expression, expressed in seedlings, roots, stems, leaves, and flowers.

It localises to the nucleus envelope. It is found in the nucleus membrane. Mediates and enhances the nuclear envelope docking of RANGAP proteins mediated by WIT1 and WIT2 in the undifferentiated cells of root tips. As component of the SUN-WIP-WIT2-KAKU1 complex, mediates the transfer of cytoplasmic forces to the nuclear envelope (NE), leading to nuclear shape changes. This chain is WPP domain-interacting protein 1 (WIP1), found in Arabidopsis thaliana (Mouse-ear cress).